We begin with the raw amino-acid sequence, 234 residues long: Leucyl/phenylalanyl-tRNA--protein transferase (234 aa).

Belongs to the L/F-transferase family.

The protein resides in the cytoplasm. It catalyses the reaction N-terminal L-lysyl-[protein] + L-leucyl-tRNA(Leu) = N-terminal L-leucyl-L-lysyl-[protein] + tRNA(Leu) + H(+). The enzyme catalyses N-terminal L-arginyl-[protein] + L-leucyl-tRNA(Leu) = N-terminal L-leucyl-L-arginyl-[protein] + tRNA(Leu) + H(+). It carries out the reaction L-phenylalanyl-tRNA(Phe) + an N-terminal L-alpha-aminoacyl-[protein] = an N-terminal L-phenylalanyl-L-alpha-aminoacyl-[protein] + tRNA(Phe). In terms of biological role, functions in the N-end rule pathway of protein degradation where it conjugates Leu, Phe and, less efficiently, Met from aminoacyl-tRNAs to the N-termini of proteins containing an N-terminal arginine or lysine. This chain is Leucyl/phenylalanyl-tRNA--protein transferase, found in Shigella dysenteriae serotype 1 (strain Sd197).